We begin with the raw amino-acid sequence, 128 residues long: Cytochrome c' (128 aa).

Heme c is bound by residues glutamine 13, glutamine 17, glutamate 69, threonine 70, cysteine 118, cysteine 121, and histidine 122.

Post-translationally, binds 1 heme c group covalently per subunit.

Its function is as follows. Cytochrome c' is the most widely occurring bacterial c-type cytochrome. Cytochromes c' are high-spin proteins and the heme has no sixth ligand. Their exact function is not known. This Magnetospirillum fulvum (Rhodospirillum fulvum) protein is Cytochrome c'.